The primary structure comprises 37 residues: Large ribosomal subunit protein bL36c (37 aa).

It belongs to the bacterial ribosomal protein bL36 family.

It is found in the plastid. Its subcellular location is the chloroplast. In Jasminum nudiflorum (Winter jasmine), this protein is Large ribosomal subunit protein bL36c.